The chain runs to 718 residues: Phenylalanine--tRNA ligase beta subunit (718 aa).

A tRNA-binding domain is found at 39 to 153; the sequence is LNEISGIKFG…IFDLESNPLK (115 aa). Residues 386–460 enclose the B5 domain; sequence SKKTFLDLNY…RFYGLEKLKD (75 aa). Residues Asp438, Asp444, and Asp448 each coordinate Mg(2+).

Belongs to the phenylalanyl-tRNA synthetase beta subunit family. Type 1 subfamily. As to quaternary structure, tetramer of two alpha and two beta subunits. The cofactor is Mg(2+).

It localises to the cytoplasm. It carries out the reaction tRNA(Phe) + L-phenylalanine + ATP = L-phenylalanyl-tRNA(Phe) + AMP + diphosphate + H(+). This is Phenylalanine--tRNA ligase beta subunit from Mesomycoplasma hyopneumoniae (strain 232) (Mycoplasma hyopneumoniae).